The primary structure comprises 213 residues: Protein-L-isoaspartate O-methyltransferase (213 aa).

Serine 61 is a catalytic residue.

Belongs to the methyltransferase superfamily. L-isoaspartyl/D-aspartyl protein methyltransferase family.

Its subcellular location is the cytoplasm. It catalyses the reaction [protein]-L-isoaspartate + S-adenosyl-L-methionine = [protein]-L-isoaspartate alpha-methyl ester + S-adenosyl-L-homocysteine. Functionally, catalyzes the methyl esterification of L-isoaspartyl residues in peptides and proteins that result from spontaneous decomposition of normal L-aspartyl and L-asparaginyl residues. It plays a role in the repair and/or degradation of damaged proteins. The protein is Protein-L-isoaspartate O-methyltransferase of Maricaulis maris (strain MCS10) (Caulobacter maris).